The sequence spans 1033 residues: Calcium-transporting ATPase 12, plasma membrane-type (1033 aa).

Met-1 is subject to N-acetylmethionine. The Cytoplasmic segment spans residues 1 to 152 (MRDLKEYDYS…NTYHKPPPKG (152 aa)). The interaction with calmodulin stretch occupies residues 25–36 (QRRWRFAYAAIY). At Ser-37 the chain carries Phosphoserine. The helical transmembrane segment at 153 to 173 (LLFFVYEAFKDLTILILLVCA) threads the bilayer. Topologically, residues 174–191 (IFSLGFGIKEHGIKEGWY) are lumenal. Residues 192–212 (EGGSIFVAVFLVIVVSALSNF) traverse the membrane as a helical segment. The Cytoplasmic portion of the chain corresponds to 213 to 341 (RQERQFDKLS…SERTPLQVRL (129 aa)). Residues 342–361 (DTLTSTIGKIGLTVAALVLV) traverse the membrane as a helical segment. The Lumenal portion of the chain corresponds to 362 to 397 (VLLVRYFTGNTEKEGKREYNGSKTPVDTVVNSVVRI). Residues 398 to 415 (VAAAVTIVVVAIPEGLPL) traverse the membrane as a helical segment. The Cytoplasmic portion of the chain corresponds to 416–806 (AVTLTLAYSM…KWGRCVYNNI (391 aa)). The 4-aspartylphosphate intermediate role is filled by Asp-453. Mg(2+) contacts are provided by Asp-751 and Asp-755. Residues 807 to 825 (QKFIQFQLTVNVAALVINF) form a helical membrane-spanning segment. The Lumenal segment spans residues 826–836 (IAAISAGEVPL). Residues 837-857 (TAVQLLWVNLIMDTLGALALA) form a helical membrane-spanning segment. Topologically, residues 858–877 (TERPTNELLKRKPVGRTEAL) are cytoplasmic. Residues 878-900 (ITNVMWRNLLVQSLYQIAVLLIL) traverse the membrane as a helical segment. Residues 901–909 (QFKGMSIFS) are Lumenal-facing. Residues 910 to 930 (VRKEVKDTLIFNTFVLCQVFN) traverse the membrane as a helical segment. Residues 931–948 (EFNAREMEKKNVFKGLHR) are Cytoplasmic-facing. Residues 949–970 (NRLFIGIIAITIVLQVIMVEFL) form a helical membrane-spanning segment. Residues 971–980 (KKFADTVRLN) lie on the Lumenal side of the membrane. The chain crosses the membrane as a helical span at residues 981-1002 (GWQWGTCIALASLSWPIGFFTK). Residues 1003–1006 (FIPV) lie on the Cytoplasmic side of the membrane.

The protein belongs to the cation transport ATPase (P-type) (TC 3.A.3) family. Type IIB subfamily.

Its subcellular location is the membrane. It catalyses the reaction Ca(2+)(in) + ATP + H2O = Ca(2+)(out) + ADP + phosphate + H(+). With respect to regulation, activated by calmodulin. This magnesium-dependent enzyme catalyzes the hydrolysis of ATP coupled with the translocation of calcium from the cytosol out of the cell or into organelles. In Arabidopsis thaliana (Mouse-ear cress), this protein is Calcium-transporting ATPase 12, plasma membrane-type (ACA12).